Consider the following 454-residue polypeptide: Septin-10 (454 aa).

The 267-residue stretch at 63–329 folds into the Septin-type G domain; that stretch reads QGFCFNILCV…ELYRRCKLEE (267 aa). Residues 73-80 form a G1 motif region; it reads GETGIGKS. Residues 73 to 80, G128, 209 to 217, G263, and R278 contribute to the GTP site; these read GETGIGKS and KADTVSKTE. Residues 125–128 are G3 motif; it reads NTVG. Residues 208–211 form a G4 motif region; that stretch reads AKAD.

Belongs to the TRAFAC class TrmE-Era-EngA-EngB-Septin-like GTPase superfamily. Septin GTPase family. As to quaternary structure, septins polymerize into heterooligomeric protein complexes that form filaments, and can associate with cellular membranes, actin filaments and microtubules. GTPase activity is required for filament formation. Interacts with ADGB. Proteolytically cleaved in vitro in a calmodulin-dependent manner. In terms of tissue distribution, widely expressed. Abundantly expressed in heart and kidney, placenta, skeletal muscles, liver and lung, as well as various tumor cell lines.

It is found in the cytoplasm. The protein resides in the cytoskeleton. It localises to the cell projection. The protein localises to the cilium. Its subcellular location is the flagellum. In terms of biological role, filament-forming cytoskeletal GTPase. May play a role in cytokinesis (Potential). This chain is Septin-10, found in Homo sapiens (Human).